Here is a 307-residue protein sequence, read N- to C-terminus: Pantothenate kinase (307 aa).

ATP is bound at residue 87–94 (GSVAVGKS).

The protein belongs to the prokaryotic pantothenate kinase family.

It localises to the cytoplasm. It catalyses the reaction (R)-pantothenate + ATP = (R)-4'-phosphopantothenate + ADP + H(+). Its pathway is cofactor biosynthesis; coenzyme A biosynthesis; CoA from (R)-pantothenate: step 1/5. The protein is Pantothenate kinase of Vibrio vulnificus (strain YJ016).